Reading from the N-terminus, the 451-residue chain is Probable multidrug resistance protein NorM (451 aa).

Transmembrane regions (helical) follow at residues 23–43 (GPVVVSQFAANALALIATAVI), 53–73 (AAAYANAAYYLVFIMVVGVML), 101–121 (LALLLSAVMLPLMWALSFVLP), 132–152 (LVAAYLRVYSLGMLPNLAFIA), 169–189 (VALTGVVWALLVAPALAFGWG), 194–214 (LGLAGAAGASASAAWIMAALL), 243–263 (WPIGLTLGAEGGMFSVTTLLM), 277–297 (TMQTITAFFMVPLGIASATGV), 316–336 (LVGLGLSSAVMLTFAVIELAA), 355–375 (LIAAATGFLSIAALFQLMDGL), 391–411 (VPLLVSLVAYWVVGLGLGSVL), and 422–442 (LWFGLTAGLTLAGLSLVGRFL).

This sequence belongs to the multi antimicrobial extrusion (MATE) (TC 2.A.66.1) family.

The protein resides in the cell membrane. Multidrug efflux pump. The protein is Probable multidrug resistance protein NorM (norM) of Deinococcus radiodurans (strain ATCC 13939 / DSM 20539 / JCM 16871 / CCUG 27074 / LMG 4051 / NBRC 15346 / NCIMB 9279 / VKM B-1422 / R1).